A 266-amino-acid polypeptide reads, in one-letter code: Heat-inducible transcription repressor HrcA (266 aa).

This sequence belongs to the HrcA family.

Its function is as follows. Negative regulator of class I heat shock genes (grpE-dnaK-dnaJ and groELS operons). Prevents heat-shock induction of these operons. In Helicobacter pylori (strain J99 / ATCC 700824) (Campylobacter pylori J99), this protein is Heat-inducible transcription repressor HrcA.